A 379-amino-acid polypeptide reads, in one-letter code: uncharacterized protein (379 aa).

This is an uncharacterized protein from Acanthamoeba polyphaga (Amoeba).